The chain runs to 489 residues: Lysine--tRNA ligase (489 aa).

The Mg(2+) site is built by E399 and E406.

Belongs to the class-II aminoacyl-tRNA synthetase family. In terms of assembly, homodimer. Mg(2+) serves as cofactor.

Its subcellular location is the cytoplasm. The catalysed reaction is tRNA(Lys) + L-lysine + ATP = L-lysyl-tRNA(Lys) + AMP + diphosphate. The protein is Lysine--tRNA ligase of Malacoplasma penetrans (strain HF-2) (Mycoplasma penetrans).